Here is a 497-residue protein sequence, read N- to C-terminus: Probable cytosol aminopeptidase (497 aa).

Positions 264 and 269 each coordinate Mn(2+). K276 is an active-site residue. Positions 287, 346, and 348 each coordinate Mn(2+). R350 is an active-site residue.

It belongs to the peptidase M17 family. It depends on Mn(2+) as a cofactor.

It localises to the cytoplasm. The catalysed reaction is Release of an N-terminal amino acid, Xaa-|-Yaa-, in which Xaa is preferably Leu, but may be other amino acids including Pro although not Arg or Lys, and Yaa may be Pro. Amino acid amides and methyl esters are also readily hydrolyzed, but rates on arylamides are exceedingly low.. The enzyme catalyses Release of an N-terminal amino acid, preferentially leucine, but not glutamic or aspartic acids.. Its function is as follows. Presumably involved in the processing and regular turnover of intracellular proteins. Catalyzes the removal of unsubstituted N-terminal amino acids from various peptides. The polypeptide is Probable cytosol aminopeptidase (Persephonella marina (strain DSM 14350 / EX-H1)).